The following is a 359-amino-acid chain: 1-deoxy-D-xylulose 5-phosphate reductoisomerase (359 aa).

Threonine 12, glycine 13, serine 14, isoleucine 15, lysine 38, and asparagine 39 together coordinate NADPH. Lysine 105 provides a ligand contact to 1-deoxy-D-xylulose 5-phosphate. Position 106 (glutamate 106) interacts with NADPH. Aspartate 130 serves as a coordination point for Mn(2+). Residues serine 131, glutamate 132, serine 152, and histidine 175 each contribute to the 1-deoxy-D-xylulose 5-phosphate site. Glutamate 132 is a binding site for Mn(2+). Glycine 181 lines the NADPH pocket. Residues serine 188, asparagine 193, lysine 194, and glutamate 197 each contribute to the 1-deoxy-D-xylulose 5-phosphate site. Glutamate 197 is a Mn(2+) binding site.

It belongs to the DXR family. The cofactor is Mg(2+). Mn(2+) is required as a cofactor.

The catalysed reaction is 2-C-methyl-D-erythritol 4-phosphate + NADP(+) = 1-deoxy-D-xylulose 5-phosphate + NADPH + H(+). Its pathway is isoprenoid biosynthesis; isopentenyl diphosphate biosynthesis via DXP pathway; isopentenyl diphosphate from 1-deoxy-D-xylulose 5-phosphate: step 1/6. Functionally, catalyzes the NADPH-dependent rearrangement and reduction of 1-deoxy-D-xylulose-5-phosphate (DXP) to 2-C-methyl-D-erythritol 4-phosphate (MEP). In Pseudothermotoga lettingae (strain ATCC BAA-301 / DSM 14385 / NBRC 107922 / TMO) (Thermotoga lettingae), this protein is 1-deoxy-D-xylulose 5-phosphate reductoisomerase.